A 95-amino-acid chain; its full sequence is Co-chaperonin GroES (95 aa).

The protein belongs to the GroES chaperonin family. Heptamer of 7 subunits arranged in a ring. Interacts with the chaperonin GroEL.

Its subcellular location is the cytoplasm. In terms of biological role, together with the chaperonin GroEL, plays an essential role in assisting protein folding. The GroEL-GroES system forms a nano-cage that allows encapsulation of the non-native substrate proteins and provides a physical environment optimized to promote and accelerate protein folding. GroES binds to the apical surface of the GroEL ring, thereby capping the opening of the GroEL channel. This is Co-chaperonin GroES from Rickettsia rickettsii (strain Sheila Smith).